The chain runs to 201 residues: MNNNNKIFQFKLVLLGEAAVGKSSLVLRFVRGHFLDYQESTIGAAFLAQTVCLNDTTVKFEIWDTAGQERYHTLAPMYYRGAQAAIVVYDIRSEDSFERAIKWVKELQRQGSPNIVIALAGNKLDLAAKRKVETAEAQQYAEENGLLFMETSAKTSQNVNELFVEIAKKLPKTPTTRPGSGRVAIAPIDNGNTGKKNKCCN.

GTP-binding positions include 16–24 (GEAAVGKSS), 35–41 (LDYQEST), 64–68 (DTAGQ), 122–125 (NKLD), and 152–154 (SAK). An Effector region motif is present at residues 38–46 (QESTIGAAF). S-geranylgeranyl cysteine attachment occurs at residues cysteine 199 and cysteine 200.

Belongs to the small GTPase superfamily. Rab family.

The protein resides in the cell membrane. The protein localises to the endosome membrane. Regulated by guanine nucleotide exchange factors (GEFs) which promote the exchange of bound GDP for free GTP. Required for the fusion of plasma membranes and early endosomes. In Dictyostelium discoideum (Social amoeba), this protein is Ras-related protein Rab-5A (rab5A).